Consider the following 478-residue polypeptide: tRNA modification GTPase MnmE (478 aa).

(6S)-5-formyl-5,6,7,8-tetrahydrofolate-binding residues include Arg36, Glu94, and Lys133. One can recognise a TrmE-type G domain in the interval 230–402 (GIHVVLAGRP…LVETLCAKVG (173 aa)). Asn240 contributes to the K(+) binding site. Residues 240–245 (NAGKSS), 259–265 (TDVAGTT), and 284–287 (DTAG) each bind GTP. Mg(2+) is bound at residue Ser244. Residues Thr259, Val261, and Thr264 each coordinate K(+). Thr265 is a Mg(2+) binding site. Lys478 is a binding site for (6S)-5-formyl-5,6,7,8-tetrahydrofolate.

This sequence belongs to the TRAFAC class TrmE-Era-EngA-EngB-Septin-like GTPase superfamily. TrmE GTPase family. In terms of assembly, homodimer. Heterotetramer of two MnmE and two MnmG subunits. K(+) serves as cofactor.

The protein resides in the cytoplasm. In terms of biological role, exhibits a very high intrinsic GTPase hydrolysis rate. Involved in the addition of a carboxymethylaminomethyl (cmnm) group at the wobble position (U34) of certain tRNAs, forming tRNA-cmnm(5)s(2)U34. The protein is tRNA modification GTPase MnmE of Psychrobacter arcticus (strain DSM 17307 / VKM B-2377 / 273-4).